A 210-amino-acid polypeptide reads, in one-letter code: Na(+)-translocating NADH-quinone reductase subunit D (210 aa).

6 consecutive transmembrane segments (helical) span residues 10–30 (VLFG…GVCS), 42–62 (LVMS…ISMI), 72–92 (IIVQ…ILKA), 103–123 (VFVG…AFAM), 143–163 (FVLI…ILGF), and 178–198 (NGLL…IWFI).

This sequence belongs to the NqrDE/RnfAE family. As to quaternary structure, composed of six subunits; NqrA, NqrB, NqrC, NqrD, NqrE and NqrF.

It localises to the cell inner membrane. It carries out the reaction a ubiquinone + n Na(+)(in) + NADH + H(+) = a ubiquinol + n Na(+)(out) + NAD(+). Functionally, NQR complex catalyzes the reduction of ubiquinone-1 to ubiquinol by two successive reactions, coupled with the transport of Na(+) ions from the cytoplasm to the periplasm. NqrA to NqrE are probably involved in the second step, the conversion of ubisemiquinone to ubiquinol. The chain is Na(+)-translocating NADH-quinone reductase subunit D from Pseudoalteromonas atlantica (strain T6c / ATCC BAA-1087).